The following is a 123-amino-acid chain: Fluoride-specific ion channel FluC (123 aa).

The next 4 membrane-spanning stretches (helical) occupy residues 6–26, 38–58, 68–88, and 100–120; these read VALVLIGGGTGAVARYYLSGV, LLVNSLASFLLGYLYGLIFWG, FLGTGFCGGLSTFSTFSYETF, and LLNIFANVLATIFLVFLGFVL. Residues Gly-75 and Ser-78 each contribute to the Na(+) site.

This sequence belongs to the fluoride channel Fluc/FEX (TC 1.A.43) family.

The protein localises to the cell membrane. The enzyme catalyses fluoride(in) = fluoride(out). Its activity is regulated as follows. Na(+) is not transported, but it plays an essential structural role and its presence is essential for fluoride channel function. Its function is as follows. Fluoride-specific ion channel. Important for reducing fluoride concentration in the cell, thus reducing its toxicity. The chain is Fluoride-specific ion channel FluC from Pyrococcus furiosus (strain ATCC 43587 / DSM 3638 / JCM 8422 / Vc1).